The primary structure comprises 343 residues: uncharacterized protein (343 aa).

This is an uncharacterized protein from Methanocaldococcus jannaschii (strain ATCC 43067 / DSM 2661 / JAL-1 / JCM 10045 / NBRC 100440) (Methanococcus jannaschii).